The chain runs to 475 residues: Ankyrin repeat, SAM and basic leucine zipper domain-containing protein 1 (475 aa).

A disordered region spans residues 1-24 (MAASALRGPPVAGGGESSESEDDG). Residues serine 17, serine 18, and serine 20 each carry the phosphoserine modification. ANK repeat units lie at residues 45-74 (EKKEKFKKAMTIGDVSLVQELLDSGISVDS), 78-107 (YGWTPLMYAASVANAELVRVLLDRGANASF), 110-144 (DKQSILITACSAHGSEEQILKCVELLLSRNADPNV), 148-177 (RLMTPIMYAARDGHTQVVALLVAHGAEVNT), 181-210 (NGYTALTWAARQGHKNIVLKLLELGANKML), and 214-243 (DGKMPSEIAKRNKHHEIFNLLSFTLNPLEG). Positions 272–334 (SYTAFGDLEV…KILAALKELQ (63 aa)) constitute an SAM domain.

As to quaternary structure, interacts with DDX4, PIWIL1, RANBP9 and TDRD1.

It is found in the cytoplasm. Plays a central role during spermatogenesis by repressing transposable elements and preventing their mobilization, which is essential for the germline integrity. Acts via the piRNA metabolic process, which mediates the repression of transposable elements during meiosis by forming complexes composed of piRNAs and Piwi proteins and governs the methylation and subsequent repression of transposons. Its association with pi-bodies suggests a participation in the primary piRNAs metabolic process. Required prior to the pachytene stage to facilitate the production of multiple types of piRNAs, including those associated with repeats involved in the regulation of retrotransposons. May act by mediating protein-protein interactions during germ cell maturation. This chain is Ankyrin repeat, SAM and basic leucine zipper domain-containing protein 1 (ASZ1), found in Gorilla gorilla gorilla (Western lowland gorilla).